Reading from the N-terminus, the 309-residue chain is Isoaspartyl peptidase/L-asparaginase (309 aa).

Residue T166 is the Nucleophile of the active site. Residues 194 to 197 and 217 to 220 each bind substrate; these read RVGD and TGHG.

The protein belongs to the Ntn-hydrolase family. In terms of assembly, heterodimer of an alpha and beta chain produced by autocleavage. In terms of processing, cleaved into an alpha and beta chain by autocatalysis; this activates the enzyme. The N-terminal residue of the beta subunit is responsible for the nucleophile hydrolase activity.

The protein resides in the cytoplasm. It catalyses the reaction L-asparagine + H2O = L-aspartate + NH4(+). The enzyme catalyses Cleavage of a beta-linked Asp residue from the N-terminus of a polypeptide.. Its function is as follows. Has both L-asparaginase and beta-aspartyl peptidase activity. Does not have aspartylglucosaminidase activity and is inactive toward GlcNAc-L-Asn. Likewise, has no activity toward glutamine. This is Isoaspartyl peptidase/L-asparaginase (asrgl1) from Xenopus laevis (African clawed frog).